A 54-amino-acid polypeptide reads, in one-letter code: Large ribosomal subunit protein bL33B (54 aa).

Belongs to the bacterial ribosomal protein bL33 family.

The sequence is that of Large ribosomal subunit protein bL33B from Mycolicibacterium vanbaalenii (strain DSM 7251 / JCM 13017 / BCRC 16820 / KCTC 9966 / NRRL B-24157 / PYR-1) (Mycobacterium vanbaalenii).